The chain runs to 63 residues: Anaphase-promoting complex subunit 13 (63 aa).

Residues 36–63 are disordered; the sequence is KTDDTEETNQETQQADAETWRDLALDTQ. The span at 53 to 63 shows a compositional bias: basic and acidic residues; sequence ETWRDLALDTQ.

It belongs to the APC13 family. Component of the anaphase promoting complex/cyclosome (APC/C) complex. As to expression, expressed constitutively in roots, leaves, stems, buds, flowers, and seeds.

Its subcellular location is the nucleus. It functions in the pathway protein modification; protein ubiquitination. In terms of biological role, component of the anaphase promoting complex/cyclosome (APC/C), a cell cycle-regulated E3 ubiquitin ligase that controls progression through mitosis and the G1 phase of the cell cycle. The APC/C complex acts by mediating ubiquitination and subsequent degradation of target proteins. Regulates global growth and development, including phyllotaxis and apical dominance. Required for pollen maturation. Promotes (pri) miRNA transcription of each MIR159 genes. This is Anaphase-promoting complex subunit 13 from Arabidopsis thaliana (Mouse-ear cress).